A 117-amino-acid chain; its full sequence is Large ribosomal subunit protein bL20c (117 aa).

This sequence belongs to the bacterial ribosomal protein bL20 family.

It is found in the plastid. The protein localises to the chloroplast. In terms of biological role, binds directly to 23S ribosomal RNA and is necessary for the in vitro assembly process of the 50S ribosomal subunit. It is not involved in the protein synthesizing functions of that subunit. The polypeptide is Large ribosomal subunit protein bL20c (Acorus gramineus (Dwarf sweet flag)).